We begin with the raw amino-acid sequence, 242 residues long: Small ribosomal subunit protein uS2 (242 aa).

It belongs to the universal ribosomal protein uS2 family.

This is Small ribosomal subunit protein uS2 from Shewanella frigidimarina (strain NCIMB 400).